A 523-amino-acid chain; its full sequence is Pentatricopeptide repeat-containing protein At3g21470 (523 aa).

13 PPR repeats span residues 10–43 (GEFH…RGVY), 44–79 (FPGW…GVCS), 80–114 (DVMV…NVAT), 115–141 (WNAM…ISVC), 143–173 (NTVT…MPFE), 176–210 (NVKA…NAFV), 211–237 (WSLM…VFAR), 238–272 (DLVI…GYEP), 273–307 (DAVT…GIEL), 308–338 (NQFV…ISVR), 339–373 (SVAC…DLKP), 374–408 (DEIT…DVKP), and 409–439 (NVKH…MHVK). The type E motif stretch occupies residues 444–523 (VLGALLGACK…SPGLSSLVLT (80 aa)).

This sequence belongs to the PPR family. PCMP-E subfamily.

This is Pentatricopeptide repeat-containing protein At3g21470 (PCMP-E29) from Arabidopsis thaliana (Mouse-ear cress).